Reading from the N-terminus, the 243-residue chain is 2-O-methyltransferase NoeI (243 aa).

Belongs to the FkbM methyltransferase family.

It localises to the cytoplasm. Its function is as follows. Required for 2-O-methylation of the fucosyl group of Nod factors. The polypeptide is 2-O-methyltransferase NoeI (noeI) (Sinorhizobium fredii (strain NBRC 101917 / NGR234)).